Reading from the N-terminus, the 196-residue chain is Imidazoleglycerol-phosphate dehydratase (196 aa).

The protein belongs to the imidazoleglycerol-phosphate dehydratase family.

The protein localises to the cytoplasm. It catalyses the reaction D-erythro-1-(imidazol-4-yl)glycerol 3-phosphate = 3-(imidazol-4-yl)-2-oxopropyl phosphate + H2O. Its pathway is amino-acid biosynthesis; L-histidine biosynthesis; L-histidine from 5-phospho-alpha-D-ribose 1-diphosphate: step 6/9. The sequence is that of Imidazoleglycerol-phosphate dehydratase from Clostridium botulinum (strain 657 / Type Ba4).